A 396-amino-acid polypeptide reads, in one-letter code: L-lactate dehydrogenase (396 aa).

Residues methionine 1–glycine 380 form the FMN hydroxy acid dehydrogenase domain. Tyrosine 24 serves as a coordination point for substrate. FMN is bound by residues serine 106 and glutamine 127. Tyrosine 129 contacts substrate. Threonine 155 is a binding site for FMN. Residue arginine 164 participates in substrate binding. Residue lysine 251 coordinates FMN. Histidine 275 acts as the Proton acceptor in catalysis. Arginine 278 provides a ligand contact to substrate. Position 306–330 (aspartate 306–arginine 330) interacts with FMN.

It belongs to the FMN-dependent alpha-hydroxy acid dehydrogenase family. FMN is required as a cofactor.

The protein resides in the cell inner membrane. The catalysed reaction is (S)-lactate + A = pyruvate + AH2. Catalyzes the conversion of L-lactate to pyruvate. Is coupled to the respiratory chain. The sequence is that of L-lactate dehydrogenase from Escherichia coli O127:H6 (strain E2348/69 / EPEC).